The chain runs to 109 residues: Translation initiation factor IF-1, chloroplastic (109 aa).

The region spanning 18 to 93 (KSLNQEKENL…TRGRIIYRLK (76 aa)) is the S1-like domain.

This sequence belongs to the IF-1 family. As to quaternary structure, component of the 30S ribosomal translation pre-initiation complex which assembles on the 30S ribosome in the order IF-2 and IF-3, IF-1 and N-formylmethionyl-tRNA(fMet); mRNA recruitment can occur at any time during PIC assembly.

It localises to the plastid. Its subcellular location is the chloroplast. One of the essential components for the initiation of protein synthesis. Stabilizes the binding of IF-2 and IF-3 on the 30S subunit to which N-formylmethionyl-tRNA(fMet) subsequently binds. Helps modulate mRNA selection, yielding the 30S pre-initiation complex (PIC). Upon addition of the 50S ribosomal subunit IF-1, IF-2 and IF-3 are released leaving the mature 70S translation initiation complex. This Tupiella akineta (Green alga) protein is Translation initiation factor IF-1, chloroplastic.